We begin with the raw amino-acid sequence, 551 residues long: Glucans biosynthesis protein D (551 aa).

The tat-type signal signal peptide spans Met1–Ala32.

This sequence belongs to the OpgD/OpgG family. Predicted to be exported by the Tat system. The position of the signal peptide cleavage has not been experimentally proven.

The protein resides in the periplasm. The protein operates within glycan metabolism; osmoregulated periplasmic glucan (OPG) biosynthesis. Probably involved in the control of the structural glucose backbone of osmoregulated periplasmic glucans (OPGs). The chain is Glucans biosynthesis protein D from Escherichia coli O9:H4 (strain HS).